A 1041-amino-acid chain; its full sequence is Toll-like receptor 8 (1041 aa).

The signal sequence occupies residues 1 to 26 (MENMFLQSSMLTCIFLLISGSCELCA). The Extracellular portion of the chain corresponds to 27–827 (EENFSRSYPC…ELTTCVSDVT (801 aa)). Residues asparagine 29, asparagine 42, asparagine 80, asparagine 88, and asparagine 115 are each glycosylated (N-linked (GlcNAc...) asparagine). Cysteine 36 and cysteine 49 are disulfide-bonded. 6 LRR repeats span residues 126 to 147 (NLRE…LPES), 148 to 168 (LTEL…GISR), 171 to 193 (NLKN…TNIE), 202 to 223 (NLEL…LPSS), 224 to 244 (LRKL…DFKG), and 247 to 268 (NLTL…FPCV). Residue asparagine 160 is glycosylated (N-linked (GlcNAc...) asparagine). An intrachain disulfide couples cysteine 181 to cysteine 187. N-linked (GlcNAc...) asparagine glycosylation occurs at asparagine 247. Cystine bridges form between cysteine 257/cysteine 270 and cysteine 260/cysteine 267. N-linked (GlcNAc...) asparagine glycosylation is found at asparagine 285 and asparagine 293. LRR repeat units lie at residues 288-309 (QLRY…WFKN), 312-334 (HLKV…AFLT), and 338-360 (RLEI…INIS). Asparagine 358 and asparagine 362 each carry an N-linked (GlcNAc...) asparagine glycan. 3 LRR repeats span residues 368 to 389 (SLRA…DFQP), 395 to 416 (NLST…LFQN), and 419 to 440 (NLEI…TRQS). 2 N-linked (GlcNAc...) asparagine glycosylation sites follow: asparagine 395 and asparagine 416. A glycan (N-linked (GlcNAc...) asparagine) is linked at asparagine 443. Residues cysteine 479 and cysteine 509 are joined by a disulfide bond. 4 LRR repeats span residues 482 to 503 (YGKA…QFEN), 506 to 527 (DIAC…TEFS), 531 to 551 (HVKY…SALT), and 555 to 577 (DLEV…THHL). Asparagine 511 and asparagine 546 each carry an N-linked (GlcNAc...) asparagine glycan. N-linked (GlcNAc...) asparagine glycans are attached at residues asparagine 582 and asparagine 590. LRR repeat units lie at residues 585–606 (NLKV…YNLE), 609–630 (SLVE…DDNR), 640–661 (NLTR…AFLN), 665–685 (SLTE…TLLQ), 689–710 (RLEL…LSDF), 713–734 (SLRT…FLSE), and 737–758 (SLKH…ALET). Asparagine 640 and asparagine 680 each carry an N-linked (GlcNAc...) asparagine glycan. An N-linked (GlcNAc...) asparagine glycan is attached at asparagine 752. The 53-residue stretch at 772 to 824 (NPFECTCDIGDFRRWMDEHLNVKIPRLVDVICASPGDQRGKSIVSLELTTCVS) folds into the LRRCT domain. Residues cysteine 776 and cysteine 803 are joined by a disulfide bond. The helical transmembrane segment at 828 to 848 (AVILFFFTFFITTMVMLAALA) threads the bilayer. Residues 849 to 1041 (HHLFYWDVWF…NMYVDSIKQY (193 aa)) are Cytoplasmic-facing. Residues 878 to 1022 (TFYDAYISYD…LFWQTLRNVV (145 aa)) form the TIR domain.

The protein belongs to the Toll-like receptor family. Homodimer. Interacts with MYD88 via their respective TIR domains. Interacts with UNC93B1. Interacts with BTK. Interacts with SMPDL3B. In terms of processing, ubiquitinated by RNF216; leading to degradation by the proteasome. Proteolytic processing occurs in monocytes and monocyte-derived macrophages by both furin-like proprotein convertase and cathepsins. The cleavage is necessary for dimer formation and subsequent activation. As to expression, expressed in myeloid dendritic cells, monocytes, and monocyte-derived dendritic cells.

Its subcellular location is the endosome membrane. With respect to regulation, activated by RNAs having enough uridines. Functionally, endosomal receptor that plays a key role in innate and adaptive immunity. Controls host immune response against pathogens through recognition of RNA degradation products specific to microorganisms that are initially processed by RNASET2. Recognizes GU-rich single-stranded RNA (GU-rich RNA) derived from SARS-CoV-2, SARS-CoV-1 and HIV-1 viruses. Upon binding to agonists, undergoes dimerization that brings TIR domains from the two molecules into direct contact, leading to the recruitment of TIR-containing downstream adapter MYD88 through homotypic interaction. In turn, the Myddosome signaling complex is formed involving IRAK4, IRAK1, TRAF6, TRAF3 leading to activation of downstream transcription factors NF-kappa-B and IRF7 to induce pro-inflammatory cytokines and interferons, respectively. This chain is Toll-like receptor 8, found in Homo sapiens (Human).